The sequence spans 145 residues: Small ribosomal subunit protein bS6 (145 aa).

It belongs to the bacterial ribosomal protein bS6 family.

Functionally, binds together with bS18 to 16S ribosomal RNA. The sequence is that of Small ribosomal subunit protein bS6 from Mycoplasmopsis agalactiae (strain NCTC 10123 / CIP 59.7 / PG2) (Mycoplasma agalactiae).